Reading from the N-terminus, the 469-residue chain is Ribulose bisphosphate carboxylase large chain (469 aa).

The propeptide occupies 1-2; the sequence is MS. At proline 3 the chain carries N-acetylproline. Lysine 14 is subject to N6,N6,N6-trimethyllysine. Residues asparagine 123 and threonine 173 each coordinate substrate. Lysine 175 functions as the Proton acceptor in the catalytic mechanism. Substrate is bound at residue lysine 177. Residues lysine 201, aspartate 203, and glutamate 204 each coordinate Mg(2+). N6-carboxylysine is present on lysine 201. Catalysis depends on histidine 294, which acts as the Proton acceptor. 3 residues coordinate substrate: arginine 295, histidine 327, and serine 379.

The protein belongs to the RuBisCO large chain family. Type I subfamily. In terms of assembly, heterohexadecamer of 8 large chains and 8 small chains; disulfide-linked. The disulfide link is formed within the large subunit homodimers. It depends on Mg(2+) as a cofactor. Post-translationally, the disulfide bond which can form in the large chain dimeric partners within the hexadecamer appears to be associated with oxidative stress and protein turnover.

The protein resides in the plastid. It localises to the chloroplast. The catalysed reaction is 2 (2R)-3-phosphoglycerate + 2 H(+) = D-ribulose 1,5-bisphosphate + CO2 + H2O. The enzyme catalyses D-ribulose 1,5-bisphosphate + O2 = 2-phosphoglycolate + (2R)-3-phosphoglycerate + 2 H(+). RuBisCO catalyzes two reactions: the carboxylation of D-ribulose 1,5-bisphosphate, the primary event in carbon dioxide fixation, as well as the oxidative fragmentation of the pentose substrate in the photorespiration process. Both reactions occur simultaneously and in competition at the same active site. This chain is Ribulose bisphosphate carboxylase large chain, found in Dianthus caryophyllus (Carnation).